The chain runs to 185 residues: AP-3 complex subunit sigma (185 aa).

This sequence belongs to the adaptor complexes small subunit family. In terms of assembly, adaptor protein complex 3 (AP-3) is a heterotetramer composed of 2 large adaptins (APL5 and APL6), a medium adaptin (APM3) and a small adaptin (APS3).

The protein localises to the golgi apparatus. It is found in the cytoplasmic vesicle membrane. Part of the AP-3 complex, an adaptor-related complex which is not clathrin-associated. The complex is associated with the Golgi region as well as more peripheral structures. It facilitates the budding of vesicles from the Golgi membrane and may be directly involved in trafficking to the vacuole. This Eremothecium gossypii (strain ATCC 10895 / CBS 109.51 / FGSC 9923 / NRRL Y-1056) (Yeast) protein is AP-3 complex subunit sigma (APS3).